Consider the following 405-residue polypeptide: Nuclear RNA export factor 2 (405 aa).

Positions 1-33 (MRGQNRRGYRNIEGRLSLSSHSSHSSPRQTHVT) are disordered. Residues 16 to 26 (LSLSSHSSHSS) are compositionally biased toward low complexity. The RRM domain occupies 26 to 94 (SPRQTHVTNL…SVVLQHIGYK (69 aa)). LRR repeat units follow at residues 97 to 118 (RISG…SSLS) and 123 to 144 (FLKF…KKLG). The region spanning 215–382 (LVEEFIITYY…VAIVSDQLFI (168 aa)) is the NTF2 domain.

The protein belongs to the NXF family.

It is found in the nucleus. Functionally, involved in the export of cellular mRNA to the cytoplasm. Plays a role in the nuclear retention of unspliced mRNAs. This chain is Nuclear RNA export factor 2, found in Caenorhabditis elegans.